A 433-amino-acid chain; its full sequence is Glutamate-1-semialdehyde 2,1-aminomutase (433 aa).

N6-(pyridoxal phosphate)lysine is present on lysine 265.

This sequence belongs to the class-III pyridoxal-phosphate-dependent aminotransferase family. HemL subfamily. As to quaternary structure, homodimer. It depends on pyridoxal 5'-phosphate as a cofactor.

The protein resides in the cytoplasm. The enzyme catalyses (S)-4-amino-5-oxopentanoate = 5-aminolevulinate. The protein operates within porphyrin-containing compound metabolism; protoporphyrin-IX biosynthesis; 5-aminolevulinate from L-glutamyl-tRNA(Glu): step 2/2. This Shewanella denitrificans (strain OS217 / ATCC BAA-1090 / DSM 15013) protein is Glutamate-1-semialdehyde 2,1-aminomutase.